Consider the following 496-residue polypeptide: Glycerol kinase (496 aa).

Position 11 (Thr11) interacts with ADP. The ATP site is built by Thr11, Ser12, and Ser13. Thr11 contacts sn-glycerol 3-phosphate. Arg15 contributes to the ADP binding site. 4 residues coordinate sn-glycerol 3-phosphate: Arg81, Glu82, Tyr133, and Asp242. Positions 81, 82, 133, 242, and 243 each coordinate glycerol. Thr264 and Gly307 together coordinate ADP. The ATP site is built by Thr264, Gly307, Gln311, and Gly412. ADP-binding residues include Gly412 and Asn416.

It belongs to the FGGY kinase family.

It catalyses the reaction glycerol + ATP = sn-glycerol 3-phosphate + ADP + H(+). The protein operates within polyol metabolism; glycerol degradation via glycerol kinase pathway; sn-glycerol 3-phosphate from glycerol: step 1/1. Its activity is regulated as follows. Inhibited by fructose 1,6-bisphosphate (FBP). Functionally, key enzyme in the regulation of glycerol uptake and metabolism. Catalyzes the phosphorylation of glycerol to yield sn-glycerol 3-phosphate. This Albidiferax ferrireducens (strain ATCC BAA-621 / DSM 15236 / T118) (Rhodoferax ferrireducens) protein is Glycerol kinase.